A 125-amino-acid chain; its full sequence is Holo-[acyl-carrier-protein] synthase (125 aa).

The Mg(2+) site is built by Asp8 and Glu57.

This sequence belongs to the P-Pant transferase superfamily. AcpS family. It depends on Mg(2+) as a cofactor.

The protein localises to the cytoplasm. The catalysed reaction is apo-[ACP] + CoA = holo-[ACP] + adenosine 3',5'-bisphosphate + H(+). In terms of biological role, transfers the 4'-phosphopantetheine moiety from coenzyme A to a Ser of acyl-carrier-protein. This chain is Holo-[acyl-carrier-protein] synthase, found in Blochmanniella pennsylvanica (strain BPEN).